A 342-amino-acid polypeptide reads, in one-letter code: Alpha-(1,3)-fucosyltransferase 7 (342 aa).

Over 1-14 the chain is Cytoplasmic; the sequence is MNNAGHGPTRRLRG. A helical; Signal-anchor for type II membrane protein transmembrane segment spans residues 15–36; that stretch reads LGVLAGVALLAALWLLWLLGSA. Topologically, residues 37-342 are lumenal; it reads PRGTPAPQPT…YEDLEGWFQA (306 aa). A disulfide bridge connects residues Cys-68 and Cys-76. The N-linked (GlcNAc...) asparagine glycan is linked to Asn-81. A disulfide bridge links Cys-211 with Cys-214. Asn-291 carries an N-linked (GlcNAc...) asparagine glycan. Cys-318 and Cys-321 are oxidised to a cystine.

This sequence belongs to the glycosyltransferase 10 family. N-glycosylated. In terms of tissue distribution, leukocytic/myeloid lineage cells.

The protein localises to the golgi apparatus. It localises to the golgi stack membrane. The enzyme catalyses an N-acetyl-alpha-neuraminyl-(2-&gt;3)-beta-D-galactosyl-(1-&gt;4)-N-acetyl-beta-D-glucosaminyl derivative + GDP-beta-L-fucose = an alpha-Neu5Ac-(2-&gt;3)-beta-D-Gal-(1-&gt;4)-[alpha-L-Fuc-(1-&gt;3)]-beta-D-GlcNAc derivative + GDP + H(+). The catalysed reaction is a neolactoside IV(3)-alpha-NeuAc-nLc4Cer + GDP-beta-L-fucose = a neolactoside IV(3)-alpha-NeuNAc,III(3)-alpha-Fuc-nLc4Cer + GDP + H(+). It catalyses the reaction a neolactoside VI(3)-alpha-NeuNAc-nLc6Cer + GDP-beta-L-fucose = a neolactoside VI(3)-alpha-NeuAc,V(3)-alphaFuc-nLc6Cer + GDP + H(+). It carries out the reaction an alpha-Neu5Ac-(2-&gt;3)-beta-D-Gal-(1-&gt;4)-beta-D-GlcNAc-(1-&gt;3)-beta-D-Gal-(1-&gt;4)-[alpha-L-Fuc-(1-&gt;3)]-beta-D-GlcNAc derivative + GDP-beta-L-fucose = an alpha-Neu5Ac-(2-&gt;3)-beta-D-Gal-(1-&gt;4)-[alpha-L-Fuc-(1-&gt;3)]-beta-D-GlcNAc-(1-&gt;3)-beta-D-Gal-(1-&gt;4)-[alpha-L-Fuc-(1-&gt;3)]-beta-D-GlcNAc derivative + GDP + H(+). The enzyme catalyses an alpha-Neu5Ac-(2-&gt;3)-beta-D-Gal-(1-&gt;4)-beta-D-GlcNAc6S derivative + GDP-beta-L-fucose = an alpha-Neu5Ac-(2-&gt;3)-beta-D-Gal-(1-&gt;4)-[alpha-L-Fuc-(1-&gt;3)]-beta-D-GlcNAc6S derivative + GDP + H(+). The catalysed reaction is alpha-Neu5Ac-(2-&gt;3)-beta-D-Gal-(1-&gt;4)-beta-D-GlcNAc-(1-&gt;3)-beta-D-Gal-(1-&gt;4)-D-Glc + GDP-beta-L-fucose = alpha-Neu5Ac-(2-&gt;3)-beta-D-Gal-(1-&gt;4)-[alpha-L-Fuc-(1-&gt;3)]-beta-D-GlcNAc-(1-&gt;3)-beta-D-Gal-(1-&gt;4)-D-Glc + GDP + H(+). It catalyses the reaction alpha-Neu5Ac-(2-&gt;3)-beta-D-Gal-(1-&gt;4)-beta-D-GlcNAc-(1-&gt;3)-beta-D-Gal-(1-&gt;4)-[alpha-L-Fuc-(1-&gt;3)]-beta-D-GlcNAc-(1-&gt;3)-beta-D-Gal-(1-&gt;4)-beta-D-GlcNAc + GDP-beta-L-fucose = alpha-Neu5Ac-(2-&gt;3)-beta-D-Gal-(1-&gt;4)-[alpha-L-Fuc-(1-&gt;3)]-beta-D-GlcNAc-(1-&gt;3)-beta-D-Gal-(1-&gt;4)-[alpha-L-Fuc-(1-&gt;3)]-beta-D-GlcNAc-(1-&gt;3)-beta-D-Gal-(1-&gt;4)-beta-D-GlcNAc + GDP + H(+). It carries out the reaction alpha-Neu5Ac-(2-&gt;3)-beta-D-Gal-(1-&gt;4)-beta-D-GlcNAc-(1-&gt;3)-beta-D-Gal-(1-&gt;4)-beta-D-GlcNAc-(1-&gt;3)-beta-D-Gal-(1-&gt;4)-beta-D-GlcNAc + GDP-beta-L-fucose = alpha-Neu5Ac-(2-&gt;3)-beta-D-Gal-(1-&gt;4)-[alpha-L-Fuc-(1-&gt;3)]-beta-D-GlcNAc-(1-&gt;3)-beta-D-Gal-(1-&gt;4)-beta-D-GlcNAc-(1-&gt;3)-beta-D-Gal-(1-&gt;4)-beta-D-GlcNAc + GDP + H(+). Its pathway is protein modification; protein glycosylation. With respect to regulation, inhibited by NaCl. Inhibited by GDP in a concentration dependent manner, with an IC(50) value of 93 uM. Also inhibited by GMP and GTP. Inhibited by N-ethylmaleimide. Activated by poly(ethylene glycol) by enhancing the thermal stability of FUT7. Activated by Mn2+, Ca2+, and Mg2+. Both panosialin A and B inhibit activity with IC(50) values of 4.8 and 5.3 ug/ml, respectively. Inhibited by gallic acid (GA) and (-)-epigallocatechin gallate (EGCG) in a time-dependent and irreversible manner with IC(50) values of 60 and 700 nM, respectively. Its function is as follows. Catalyzes the transfer of L-fucose, from a guanosine diphosphate-beta-L-fucose, to the N-acetyl glucosamine (GlcNAc) of a distal alpha2,3 sialylated lactosamine unit of a glycoprotein or a glycolipid-linked sialopolylactosamines chain through an alpha-1,3 glycosidic linkage and participates in the final fucosylation step in the biosynthesis of the sialyl Lewis X (sLe(x)), a carbohydrate involved in cell and matrix adhesion during leukocyte trafficking and fertilization. In vitro, also synthesizes sialyl-dimeric-Lex structures, from VIM-2 structures and both di-fucosylated and trifucosylated structures from mono-fucosylated precursors. However does not catalyze alpha 1-3 fucosylation when an internal alpha 1-3 fucosylation is present in polylactosamine chain and the fucosylation rate of the internal GlcNAc residues is reduced once fucose has been added to the distal GlcNAc. Also catalyzes the transfer of a fucose from GDP-beta-fucose to the 6-sulfated a(2,3)sialylated substrate to produce 6-sulfo sLex mediating significant L-selectin-dependent cell adhesion. Through sialyl-Lewis(x) biosynthesis, can control SELE- and SELP-mediated cell adhesion with leukocytes and allows leukocytes tethering and rolling along the endothelial tissue thereby enabling the leukocytes to accumulate at a site of inflammation. May enhance embryo implantation through sialyl Lewis X (sLeX)-mediated adhesion of embryo cells to endometrium. May affect insulin signaling by up-regulating the phosphorylation and expression of some signaling molecules involved in the insulin-signaling pathway through SLe(x) which is present on the glycans of the INSRR alpha subunit. The polypeptide is Alpha-(1,3)-fucosyltransferase 7 (Homo sapiens (Human)).